The sequence spans 92 residues: PqqA binding protein (92 aa).

The protein belongs to the PqqD family. As to quaternary structure, monomer. Interacts with PqqE.

The protein operates within cofactor biosynthesis; pyrroloquinoline quinone biosynthesis. Functions as a PqqA binding protein and presents PqqA to PqqE, in the pyrroloquinoline quinone (PQQ) biosynthetic pathway. This is PqqA binding protein from Xanthomonas euvesicatoria pv. vesicatoria (strain 85-10) (Xanthomonas campestris pv. vesicatoria).